We begin with the raw amino-acid sequence, 326 residues long: Thioredoxin reductase (326 aa).

Residue 55 to 62 (EGPEPGGQ) participates in FAD binding. A disulfide bridge links cysteine 156 with cysteine 159. Residue 298–307 (DVSNKLYAQA) coordinates FAD.

This sequence belongs to the class-II pyridine nucleotide-disulfide oxidoreductase family. As to quaternary structure, homodimer. Requires FAD as cofactor.

The protein localises to the cytoplasm. It catalyses the reaction [thioredoxin]-dithiol + NADP(+) = [thioredoxin]-disulfide + NADPH + H(+). In Borreliella burgdorferi (strain ATCC 35210 / DSM 4680 / CIP 102532 / B31) (Borrelia burgdorferi), this protein is Thioredoxin reductase (trxB).